The following is a 121-amino-acid chain: Inner membrane protein YhaH (121 aa).

Topologically, residues 1–23 are periplasmic; it reads MDWYLKVLKNYVGFRGRARRKEY. A helical transmembrane segment spans residues 24-44; that stretch reads WMFILVNIIFTFVLGLLDKML. At 45–49 the chain is on the cytoplasmic side; that stretch reads GWQRA. The chain crosses the membrane as a helical span at residues 50-70; it reads GGEGILTTIYGILVFLPWWAV. At 71 to 80 the chain is on the periplasmic side; sequence QFRRLHDTDR. The chain crosses the membrane as a helical span at residues 81 to 101; sequence SAWWALLFLIPFIGWLIIIVF. Residues 102 to 121 are Cytoplasmic-facing; it reads NCQAGTPGENRFGPDPKLEP.

The protein to E.coli YhaI.

It is found in the cell inner membrane. This chain is Inner membrane protein YhaH (yhaH), found in Escherichia coli O157:H7.